A 225-amino-acid chain; its full sequence is Ribonuclease HII (225 aa).

Residues 2-210 (GIVVGVDEAG…VRKLGGPWRS (209 aa)) form the RNase H type-2 domain. Asp-8, Glu-9, and Asp-107 together coordinate a divalent metal cation.

It belongs to the RNase HII family. Mn(2+) is required as a cofactor. The cofactor is Mg(2+).

The protein resides in the cytoplasm. The catalysed reaction is Endonucleolytic cleavage to 5'-phosphomonoester.. In terms of biological role, endonuclease that specifically degrades the RNA of RNA-DNA hybrids. This Aeropyrum pernix (strain ATCC 700893 / DSM 11879 / JCM 9820 / NBRC 100138 / K1) protein is Ribonuclease HII (rnhB).